A 238-amino-acid polypeptide reads, in one-letter code: MEEQDARVPALEPFRVEQAPPLIYYVPDFISKEEEEYLLRQVFNAPKPKWTQLSGRKLQNWGGLPHPRGMVPERLPPWLQRYVDKVSDLSLFGGLPANHVLVNQYLPGEGIMPHEDGPLYYPTVSTISLGSHTVLDFYEPRQPDDDVPMEQPRPPQRPITSLLVEPRSLLVLRGTAYTRLLHGISATRVDELDATSLPPNATACKSALPGAHLVRGTRVSLTIRRVPRVLRASLLLSK.

The Fe2OG dioxygenase domain occupies 96 to 227 (PANHVLVNQY…RVSLTIRRVP (132 aa)). 2 residues coordinate 2-oxoglutarate: Asn103 and Tyr105. Fe cation is bound by residues His114, Asp116, and His182. Residues Arg218 and Ser220 each coordinate 2-oxoglutarate.

Belongs to the alkB family. Interacts with VCPKMT. Fe(2+) serves as cofactor.

It localises to the cytoplasm. Its subcellular location is the nucleus. Functionally, probable Fe(2+)/2-oxoglutarate-dependent dioxygenase involved in oxidative demethylation of nucleic acids. Binds nucleic acids with a preference for ssDNA or ssRNA to other types of DNAs. May play a role in nucleic acid damage repair. The polypeptide is Probable RNA/DNA demethylase ALKBH6 (Alkbh6) (Mus musculus (Mouse)).